A 330-amino-acid polypeptide reads, in one-letter code: Ferredoxin--NADP reductase (330 aa).

FAD is bound by residues E35, Q43, Y48, V90, F123, D285, and T326.

This sequence belongs to the ferredoxin--NADP reductase type 2 family. Homodimer. It depends on FAD as a cofactor.

The catalysed reaction is 2 reduced [2Fe-2S]-[ferredoxin] + NADP(+) + H(+) = 2 oxidized [2Fe-2S]-[ferredoxin] + NADPH. The chain is Ferredoxin--NADP reductase from Streptococcus pyogenes serotype M2 (strain MGAS10270).